Reading from the N-terminus, the 301-residue chain is MFKRKSTAELAAQMAKLNGNKGFSSEDKGEWKLKLDNAGNGQAVIRFLPSKNDEQAPFAILVNHGFKKNGKWYIETCSSTHGDYDSCPVCQYISKNDLYNTDNKEYSLVKRKTSYWANILVVKDPAAPENEGKVFKYRFGKKIWDKINAMIAVDVEMGETPVDVTCPWEGANFVLKVKQVSGFSNYDESKFLNQSAIPNIDDESFQKELFEQMVDLSEMTSKDKFKSFEELNTKFGQVMGTAVMGGAAATAAKKADKVADDLDAFNVDDFNTKTEDDFMSSSSGSSSSADDTDLDDLLNDL.

The LAST stretch occupies residues 3–7 (KRKST). Residues His-64, Cys-77, Cys-87, and Cys-90 each contribute to the Zn(2+) site. The tract at residues 272-301 (TKTEDDFMSSSSGSSSSADDTDLDDLLNDL) is disordered. Residues 279 to 289 (MSSSSGSSSSA) show a composition bias toward low complexity. The span at 290-301 (DDTDLDDLLNDL) shows a compositional bias: acidic residues.

The protein belongs to the Tequatrovirus single-stranded DNA-binding protein family. Homodimer in the absence of DNA, monomer when binding DNA. Interacts with the DNA helicase assembly protein; a ternary complex between the helicase assembly protein, the single-stranded DNA-binding protein and ssDNA is an obligatory intermediate in the helicase loading mechanism. Part of the replicase complex that includes the DNA polymerase, the polymerase clamp, the clamp loader complex, the single-stranded DNA binding protein, the primase, the DnaB-like SF4 replicative helicase and the helicase assembly factor. Interacts (via C-terminus) with the viral SF1 dDA helicase. Interacts with the viral SF2 UvsW repair helicase.

Single-stranded DNA-binding protein that participates in viral DNA replication, recombination, and repair. Coats the lagging-strand ssDNA as the replication fork advances. Stimulates the activities of viral DNA polymerase and DnaB-like SF4 replicative helicase, probably via its interaction with the helicase assembly factor. Stimulates the unwinding activity of UvsW helicase, inhibits it DNA winding activity. Together with DnaB-like SF4 replicative helicase and the helicase assembly factor, promotes pairing of two homologous DNA molecules containing complementary single-stranded regions and mediates homologous DNA strand exchange. Also promotes the formation of joint molecules. mRNA specific autogenous translational repressor. The chain is Single-stranded DNA-binding protein from Escherichia coli (Bacteriophage T4).